We begin with the raw amino-acid sequence, 644 residues long: Exoribonuclease 2 (644 aa).

Residues 189–516 (REDLTALDFV…NHRLLKAVIK (328 aa)) enclose the RNB domain. Residues 561 to 643 (GTRFAAEIVD…ETRGIIARPV (83 aa)) enclose the S1 motif domain.

It belongs to the RNR ribonuclease family. RNase II subfamily.

It localises to the cytoplasm. It catalyses the reaction Exonucleolytic cleavage in the 3'- to 5'-direction to yield nucleoside 5'-phosphates.. Its function is as follows. Involved in mRNA degradation. Hydrolyzes single-stranded polyribonucleotides processively in the 3' to 5' direction. This Shigella sonnei (strain Ss046) protein is Exoribonuclease 2.